A 268-amino-acid chain; its full sequence is Hydroxyethylthiazole kinase (268 aa).

Met47 provides a ligand contact to substrate. Lys123 and Thr170 together coordinate ATP. Ala196 contacts substrate.

Belongs to the Thz kinase family. Mg(2+) is required as a cofactor.

It carries out the reaction 5-(2-hydroxyethyl)-4-methylthiazole + ATP = 4-methyl-5-(2-phosphooxyethyl)-thiazole + ADP + H(+). The protein operates within cofactor biosynthesis; thiamine diphosphate biosynthesis; 4-methyl-5-(2-phosphoethyl)-thiazole from 5-(2-hydroxyethyl)-4-methylthiazole: step 1/1. Its function is as follows. Catalyzes the phosphorylation of the hydroxyl group of 4-methyl-5-beta-hydroxyethylthiazole (THZ). This chain is Hydroxyethylthiazole kinase, found in Finegoldia magna (strain ATCC 29328 / DSM 20472 / WAL 2508) (Peptostreptococcus magnus).